Reading from the N-terminus, the 234-residue chain is Golgi SNAP receptor complex member 1 (234 aa).

Topologically, residues 1–212 are cytoplasmic; sequence MSETWEALRK…MQKIKTKKQK (212 aa). A coiled-coil region spans residues 54 to 121; it reads VTTEIEGLIE…RDNVDQVLQR (68 aa). The helical; Anchor for type IV membrane protein transmembrane segment at 213–233 threads the bilayer; that stretch reads NTMILAGVISACLIFTIFWII. Residue N234 is a topological domain, vesicular.

The protein belongs to the GOSR1 family. As to quaternary structure, component of several multiprotein Golgi SNARE complexes.

It is found in the golgi apparatus membrane. Its function is as follows. Involved in transport from the ER to the Golgi apparatus as well as in intra-Golgi transport. It belongs to a super-family of proteins called t-SNAREs or soluble NSF (N-ethylmaleimide-sensitive factor) attachment protein receptor. Cooperates with ykt-6 for proper expression of Golgi-resident proteins. Required along with ykt-6 for normal embryonic development, seam cell division or differentiation, and ray formation. The sequence is that of Golgi SNAP receptor complex member 1 from Caenorhabditis briggsae.